A 339-amino-acid polypeptide reads, in one-letter code: Ketol-acid reductoisomerase (NADP(+)) (339 aa).

Positions 1–182 constitute a KARI N-terminal Rossmann domain; sequence MRVYYDRDAD…GGGRSGIIET (182 aa). NADP(+) is bound by residues 24 to 27, Lys-48, Ser-51, Thr-53, and 83 to 86; these read YGSQ and DELQ. The active site involves His-108. Residue Gly-134 participates in NADP(+) binding. A KARI C-terminal knotted domain is found at 183-328; sequence NFREECETDL…AKLRAMMPWI (146 aa). Mg(2+)-binding residues include Asp-191, Glu-195, Glu-227, and Glu-231. Ser-252 provides a ligand contact to substrate.

The protein belongs to the ketol-acid reductoisomerase family. The cofactor is Mg(2+).

It catalyses the reaction (2R)-2,3-dihydroxy-3-methylbutanoate + NADP(+) = (2S)-2-acetolactate + NADPH + H(+). The catalysed reaction is (2R,3R)-2,3-dihydroxy-3-methylpentanoate + NADP(+) = (S)-2-ethyl-2-hydroxy-3-oxobutanoate + NADPH + H(+). The protein operates within amino-acid biosynthesis; L-isoleucine biosynthesis; L-isoleucine from 2-oxobutanoate: step 2/4. Its pathway is amino-acid biosynthesis; L-valine biosynthesis; L-valine from pyruvate: step 2/4. In terms of biological role, involved in the biosynthesis of branched-chain amino acids (BCAA). Catalyzes an alkyl-migration followed by a ketol-acid reduction of (S)-2-acetolactate (S2AL) to yield (R)-2,3-dihydroxy-isovalerate. In the isomerase reaction, S2AL is rearranged via a Mg-dependent methyl migration to produce 3-hydroxy-3-methyl-2-ketobutyrate (HMKB). In the reductase reaction, this 2-ketoacid undergoes a metal-dependent reduction by NADPH to yield (R)-2,3-dihydroxy-isovalerate. The chain is Ketol-acid reductoisomerase (NADP(+)) from Mesorhizobium japonicum (strain LMG 29417 / CECT 9101 / MAFF 303099) (Mesorhizobium loti (strain MAFF 303099)).